A 168-amino-acid polypeptide reads, in one-letter code: Vasopressin-neurophysin 2-copeptin (168 aa).

Residues 1–23 (MLARMLNTTLSACFLSLLAFSSA) form the signal peptide. A disulfide bond links Cys-24 and Cys-29. Residue Gly-32 is modified to Glycine amide. Disulfide bonds link Cys-45–Cys-89, Cys-48–Cys-62, Cys-56–Cys-79, Cys-63–Cys-69, Cys-96–Cys-108, Cys-102–Cys-120, and Cys-109–Cys-114. N-linked (GlcNAc...) asparagine glycosylation is present at Asn-135.

This sequence belongs to the vasopressin/oxytocin family. As to quaternary structure, interacts with vasopressin receptors V1bR/AVPR1B (Ki=85 pM), V1aR/AVPR1A (Ki=0.6 nM) and V2R/AVPR2 (Ki=4.9 nM). Interacts with oxytocin receptor (OXTR) (Ki=110 nM).

It is found in the secreted. In terms of biological role, neurophysin 2 specifically binds vasopressin. Functionally, vasopressin has a direct antidiuretic action on the kidney, it also causes vasoconstriction of the peripheral vessels. Acts by binding to vasopressin receptors (V1bR/AVPR1B, V1aR/AVPR1A, and V2R/AVPR2). The sequence is that of Vasopressin-neurophysin 2-copeptin (Avp) from Mus musculus (Mouse).